A 406-amino-acid polypeptide reads, in one-letter code: Argininosuccinate synthase (406 aa).

ATP-binding positions include 11 to 19 and Ala38; that span reads AYSGGLDTS. L-citrulline-binding residues include Tyr91 and Ser96. An ATP-binding site is contributed by Gly121. The L-aspartate site is built by Thr123, Asn127, and Asp128. Position 127 (Asn127) interacts with L-citrulline. Arg131, Ser181, Ser190, Glu266, and Tyr278 together coordinate L-citrulline.

This sequence belongs to the argininosuccinate synthase family. Type 1 subfamily. Homotetramer.

The protein resides in the cytoplasm. It catalyses the reaction L-citrulline + L-aspartate + ATP = 2-(N(omega)-L-arginino)succinate + AMP + diphosphate + H(+). It functions in the pathway amino-acid biosynthesis; L-arginine biosynthesis; L-arginine from L-ornithine and carbamoyl phosphate: step 2/3. This Campylobacter lari (strain RM2100 / D67 / ATCC BAA-1060) protein is Argininosuccinate synthase.